We begin with the raw amino-acid sequence, 290 residues long: Pyridoxal kinase PdxY (290 aa).

Residues Ser12 and 47 to 48 (TQ) contribute to the substrate site. ATP is bound by residues Asp114, Glu151, Lys184, and 211-214 (RPLL). Residue Asp225 participates in substrate binding.

It belongs to the pyridoxine kinase family. PdxY subfamily. As to quaternary structure, homodimer. Requires Mg(2+) as cofactor.

The catalysed reaction is pyridoxal + ATP = pyridoxal 5'-phosphate + ADP + H(+). The protein operates within cofactor metabolism; pyridoxal 5'-phosphate salvage; pyridoxal 5'-phosphate from pyridoxal: step 1/1. Functionally, pyridoxal kinase involved in the salvage pathway of pyridoxal 5'-phosphate (PLP). Catalyzes the phosphorylation of pyridoxal to PLP. The sequence is that of Pyridoxal kinase PdxY from Pseudomonas fluorescens (strain ATCC BAA-477 / NRRL B-23932 / Pf-5).